The chain runs to 304 residues: MSDTWRRRRSGCNDANATEELVYSTVRSDHRQRRPSRGTFVMRENDLYDKQSVSKENDLYESASPNDDKVYTRRGMSTAAHYRDSEHIYETCEGDEFYDACEYSLIGGGKLSTSNGRQSPAKAQPPPRGAAAAPPPRVPTRPPTRAAATSTTPRQQDCAPKQRASPGVNSIKSGKGLAFSGTPKTPKSQWYGATHLFNKNVFCAAVSRVAAAHASDAASALWDLNPPKTNEDLDRFLKAAAIRILVCEGAQLLEVANSTMESTPDGYAAAGPNGYDRRPRTASRRRSLKCKPPADDFFDDTNSG.

2 disordered regions span residues 23–68 and 112–184; these read YSTV…PNDD and STSN…GTPK. Positions 43–58 are enriched in basic and acidic residues; it reads RENDLYDKQSVSKEND. A compositionally biased stretch (pro residues) spans 123 to 142; sequence AQPPPRGAAAAPPPRVPTRP. A compositionally biased stretch (low complexity) spans 143–154; sequence PTRAAATSTTPR. Residues 160–163 carry the Nuclear localization signal motif; sequence PKQR. The Nuclear export signal motif lies at 233–245; that stretch reads LDRFLKAAAIRIL. A disordered region spans residues 262–304; sequence STPDGYAAAGPNGYDRRPRTASRRRSLKCKPPADDFFDDTNSG. The segment covering 280 to 289 has biased composition (basic residues); sequence RTASRRRSLK.

It belongs to the alphaherpesvirinae VP22 tegument protein family. In terms of assembly, interacts with gE (via C-terminus); this interaction is necessary for the recruitment of VP22 to the Golgi and its packaging into virions. Interacts with gM (via C-terminus). Interacts with VP16; this interaction allows the formation of a tripartite complex composed of VP16, VP22 and UL41/VHS. Interacts with the capsid-binding protein UL16. Interacts with host CGAS. Highly phosphorylated in the host cell. Packaging is selective for underphosphorylated forms.

The protein localises to the virion tegument. The protein resides in the host cytoplasm. It is found in the host nucleus. Its subcellular location is the host Golgi apparatus. In terms of biological role, tegument protein that plays different roles during the time course of infection. Participates in both the accumulation of viral mRNAs and viral protein translation at late time of infection. Modulates the RNase activity of the virion host shutoff protein UL41 probably to ensure necessary levels of key cellular mRNAs and proteins. Plays a role in microtubule reorganization that occurs after viral infection by stabilizing microtubule network. Plays a role in the inhibition of host innate immune system by targeting the CGAS enzymatic activity which is the principal cytosolic DNA sensor that detects invading viral DNA. Acts by mediating disruption of liquid-like droplets in which CGAS is activated, thereby preventing CGAS activity. The chain is Tegument protein VP22 from Equine herpesvirus 1 (strain Ab4p) (EHV-1).